Reading from the N-terminus, the 370-residue chain is Polyadenylate-binding protein 4-like (370 aa).

RRM domains lie at 10 to 88 (ASLY…WSQR), 98 to 174 (GNVF…RFKN), 190 to 267 (TNVY…RAQK), and 293 to 369 (VKLY…LAQR).

The protein belongs to the polyadenylate-binding protein type-1 family.

Its function is as follows. May bind RNA. The protein is Polyadenylate-binding protein 4-like (PABPC4L) of Homo sapiens (Human).